The chain runs to 468 residues: Glutamate--tRNA ligase 2 (468 aa).

Residues 9–19 carry the 'HIGH' region motif; that stretch reads PSPTGSLHLGG. A 'KMSKS' region motif is present at residues 238–242; sequence KLSKR. ATP is bound at residue Lys-241.

This sequence belongs to the class-I aminoacyl-tRNA synthetase family. Glutamate--tRNA ligase type 1 subfamily. As to quaternary structure, monomer.

The protein resides in the cytoplasm. The catalysed reaction is tRNA(Glu) + L-glutamate + ATP = L-glutamyl-tRNA(Glu) + AMP + diphosphate. Functionally, catalyzes the attachment of glutamate to tRNA(Glu) in a two-step reaction: glutamate is first activated by ATP to form Glu-AMP and then transferred to the acceptor end of tRNA(Glu). In Anaplasma phagocytophilum (strain HZ), this protein is Glutamate--tRNA ligase 2.